The primary structure comprises 343 residues: Tetraacyldisaccharide 4'-kinase (343 aa).

An ATP-binding site is contributed by 61–68; it reads GVGGNGKT.

This sequence belongs to the LpxK family.

It catalyses the reaction a lipid A disaccharide + ATP = a lipid IVA + ADP + H(+). It functions in the pathway glycolipid biosynthesis; lipid IV(A) biosynthesis; lipid IV(A) from (3R)-3-hydroxytetradecanoyl-[acyl-carrier-protein] and UDP-N-acetyl-alpha-D-glucosamine: step 6/6. Its function is as follows. Transfers the gamma-phosphate of ATP to the 4'-position of a tetraacyldisaccharide 1-phosphate intermediate (termed DS-1-P) to form tetraacyldisaccharide 1,4'-bis-phosphate (lipid IVA). The protein is Tetraacyldisaccharide 4'-kinase of Colwellia psychrerythraea (strain 34H / ATCC BAA-681) (Vibrio psychroerythus).